Reading from the N-terminus, the 128-residue chain is Putative lipid-binding protein At4g00165 (128 aa).

The N-terminal stretch at 1 to 23 (MGISKALRSLLILLLLNITFFFG) is a signal peptide. 4 disulfides stabilise this stretch: Cys-34–Cys-90, Cys-46–Cys-76, Cys-56–Cys-75, and Cys-92–Cys-128.

This sequence belongs to the plant LTP family. PEARLI1 subfamily.

The protein resides in the secreted. The sequence is that of Putative lipid-binding protein At4g00165 from Arabidopsis thaliana (Mouse-ear cress).